Consider the following 131-residue polypeptide: Small ribosomal subunit protein uS11 (131 aa).

Belongs to the universal ribosomal protein uS11 family. As to quaternary structure, part of the 30S ribosomal subunit. Interacts with proteins S7 and S18. Binds to IF-3.

Located on the platform of the 30S subunit, it bridges several disparate RNA helices of the 16S rRNA. Forms part of the Shine-Dalgarno cleft in the 70S ribosome. This chain is Small ribosomal subunit protein uS11, found in Trichodesmium erythraeum (strain IMS101).